A 211-amino-acid chain; its full sequence is Protein N-terminal glutamine amidohydrolase (211 aa).

Active-site residues include C24, H78, and D94.

Belongs to the NTAQ1 family. As to quaternary structure, monomer.

It catalyses the reaction N-terminal L-glutaminyl-[protein] + H2O = N-terminal L-glutamyl-[protein] + NH4(+). Its function is as follows. Mediates the side-chain deamidation of N-terminal glutamine residues to glutamate, an important step in N-end rule pathway of protein degradation. Conversion of the resulting N-terminal glutamine to glutamate renders the protein susceptible to arginylation, polyubiquitination and degradation as specified by the N-end rule. Does not act on substrates with internal or C-terminal glutamine and does not act on non-glutamine residues in any position. In Anopheles gambiae (African malaria mosquito), this protein is Protein N-terminal glutamine amidohydrolase (tun).